The primary structure comprises 339 residues: Homeobox protein DBX2 (339 aa).

The segment at residues 186 to 245 (GILRRAVFSEDQRKALEKMFQKQKYISKTDRKKLAINLGLKESQVKIWFQNRRMKWRNSK) is a DNA-binding region (homeobox). The tract at residues 282–318 (VPQQHSSPRWRENSPEPSERLIQESSGAPPPEANSLQ) is disordered. The segment covering 290–303 (RWRENSPEPSERLI) has biased composition (basic and acidic residues).

The protein belongs to the H2.0 homeobox family.

It is found in the nucleus. In Homo sapiens (Human), this protein is Homeobox protein DBX2 (DBX2).